Reading from the N-terminus, the 79-residue chain is MKTLLLTLVMVTIMCLDLGYTLTCYKRYFDTVVCKPQETICYRYIIPATHGNAITYRGCSTSCPSGIRLVCCSTDLCNK.

A signal peptide spans 1-21 (MKTLLLTLVMVTIMCLDLGYT). Intrachain disulfides connect Cys24–Cys41, Cys34–Cys59, Cys63–Cys71, and Cys72–Cys77.

The protein belongs to the three-finger toxin family. Short-chain subfamily. Type III alpha-neurotoxin sub-subfamily. As to expression, expressed by the venom gland.

The protein localises to the secreted. Binds with high affinity to muscle nicotinic acetylcholine receptor (nAChR) and hinders acetylcholine binding to the receptor, thereby impairing neuromuscular transmission. Competes with the binding of alpha-bungarotoxin on muscle AChR (from Torpedo) (IC(50)=0.30 uM). In vivo, causes muscle paralysis, spasms and increased respiration. The polypeptide is Short neurotoxin 7 (Pseudonaja textilis (Eastern brown snake)).